The sequence spans 103 residues: KRSLRDLGILVNQIIPEGGSLKCLKDLPRAWFNVVPYREVGLMTAIFLEKEYGMPYVSVTPMGILDTAEFVRQMERLVNAWASVLPEKQANYSSYIKDQTNFV.

The protein belongs to the ChlB/BchB/BchZ family. In terms of assembly, protochlorophyllide reductase is composed of three subunits; ChlL, ChlN and ChlB. Forms a heterotetramer of two ChlB and two ChlN subunits. It depends on [4Fe-4S] cluster as a cofactor.

The protein localises to the plastid. It localises to the chloroplast. It carries out the reaction chlorophyllide a + oxidized 2[4Fe-4S]-[ferredoxin] + 2 ADP + 2 phosphate = protochlorophyllide a + reduced 2[4Fe-4S]-[ferredoxin] + 2 ATP + 2 H2O. It functions in the pathway porphyrin-containing compound metabolism; chlorophyll biosynthesis (light-independent). Component of the dark-operative protochlorophyllide reductase (DPOR) that uses Mg-ATP and reduced ferredoxin to reduce ring D of protochlorophyllide (Pchlide) to form chlorophyllide a (Chlide). This reaction is light-independent. The NB-protein (ChlN-ChlB) is the catalytic component of the complex. The sequence is that of Light-independent protochlorophyllide reductase subunit B (chlB) from Salvinia auriculata (Eared water-moss).